The primary structure comprises 555 residues: Formate--tetrahydrofolate ligase (555 aa).

An ATP-binding site is contributed by 65 to 72 (TPAGEGKS).

It belongs to the formate--tetrahydrofolate ligase family.

It catalyses the reaction (6S)-5,6,7,8-tetrahydrofolate + formate + ATP = (6R)-10-formyltetrahydrofolate + ADP + phosphate. The protein operates within one-carbon metabolism; tetrahydrofolate interconversion. In Staphylococcus aureus (strain NCTC 8325 / PS 47), this protein is Formate--tetrahydrofolate ligase.